Here is a 493-residue protein sequence, read N- to C-terminus: uncharacterized protein (493 aa).

A helical transmembrane segment spans residues 10–30 (LVPSTRFALSLVMFFGCLVTY). Residues Asn-35, Asn-47, and Asn-69 are each glycosylated (N-linked (GlcNAc...) asparagine). 6 helical membrane-spanning segments follow: residues 85–105 (MVLS…GHLA), 112–132 (RVVF…PVAA), 144–164 (AAIG…WSVW), 175–195 (GVTY…SGFL), 205–225 (PSIF…WWYV), and 272–292 (AVWA…TMLV). N-linked (GlcNAc...) asparagine glycosylation is present at Asn-305. Helical transmembrane passes span 311-331 (AVAS…GVLA), 348-368 (AAML…GYCG), 375-395 (VIIF…GFVV), and 406-426 (GTVM…SPAV). A glycan (N-linked (GlcNAc...) asparagine) is linked at Asn-433. Residues 441–461 (MVLWLTAGILTIGALLFSIFA) form a helical membrane-spanning segment.

Belongs to the major facilitator superfamily. Sodium/anion cotransporter family.

It localises to the membrane. This is an uncharacterized protein from Caenorhabditis elegans.